Here is a 114-residue protein sequence, read N- to C-terminus: Probable divalent-cation tolerance protein cutA homolog (114 aa).

This sequence belongs to the CutA family. In terms of assembly, homotrimer.

This Encephalitozoon cuniculi (strain GB-M1) (Microsporidian parasite) protein is Probable divalent-cation tolerance protein cutA homolog.